Here is a 330-residue protein sequence, read N- to C-terminus: Interleukin-12 subunit beta (330 aa).

An N-terminal signal peptide occupies residues 1–22; sequence MHPQQLVVSWFSLVLLASPIMA. Positions 23-106 constitute an Ig-like C2-type domain; the sequence is IWELEKNVYV…LSHSLLLLHK (84 aa). Residues cysteine 50 and cysteine 90 are joined by a disulfide bond. N-linked (GlcNAc...) asparagine glycosylation is found at asparagine 136 and asparagine 224. The Fibronectin type-III domain maps to 239 to 330; sequence PPKNLQLKPL…WSEWASVSCS (92 aa).

The protein belongs to the IL-12B family. As to quaternary structure, heterodimer with IL12A; disulfide-linked. The heterodimer is known as interleukin IL-12. Heterodimer with IL23A; disulfide-linked. The heterodimer is known as interleukin IL-23. Also secreted as a monomer. Interacts with NBR1; this interaction promotes IL-12 secretion.

The protein resides in the secreted. Cytokine that can act as a growth factor for activated T and NK cells, enhance the lytic activity of NK/lymphokine-activated killer cells, and stimulate the production of IFN-gamma by resting PBMC. In terms of biological role, associates with IL23A to form the IL-23 interleukin, a heterodimeric cytokine which functions in innate and adaptive immunity. IL-23 may constitute with IL-17 an acute response to infection in peripheral tissues. IL-23 binds to a heterodimeric receptor complex composed of IL12RB1 and IL23R, activates the Jak-Stat signaling cascade, stimulates memory rather than naive T-cells and promotes production of pro-inflammatory cytokines. IL-23 induces autoimmune inflammation and thus may be responsible for autoimmune inflammatory diseases and may be important for tumorigenesis. The polypeptide is Interleukin-12 subunit beta (IL12B) (Lama glama (Llama)).